We begin with the raw amino-acid sequence, 295 residues long: HTH-type transcriptional regulator TrpI (295 aa).

Positions 6–63 constitute an HTH lysR-type domain; it reads PSLNALRAFEAAARLHSISLAAEELHVTHGAVSRQVRLLEDDLGVALFGKDGRGVKLT. The segment at residues 23–42 is a DNA-binding region (H-T-H motif); the sequence is ISLAAEELHVTHGAVSRQVR.

The protein belongs to the LysR transcriptional regulatory family. As to quaternary structure, homotetramer.

Its function is as follows. Activates the expression of the trpBA genes, which encode the two tryptophan synthase subunits, and represses initiation at its own promoter. Acts by binding to two adjacent sites in the intergenic region. In the absence of the inducer indoleglycerol phosphate (InGP), TrpI binds to site I. In the presence of InGP, TrpI binds to site I and site II. Binding to site II is site I dependent. InGP strongly stimulates binding to site II and is required for maximal activation of trpBA. The polypeptide is HTH-type transcriptional regulator TrpI (Pseudomonas aeruginosa (strain ATCC 15692 / DSM 22644 / CIP 104116 / JCM 14847 / LMG 12228 / 1C / PRS 101 / PAO1)).